The primary structure comprises 224 residues: tRNA (guanine-N(7)-)-methyltransferase (224 aa).

S-adenosyl-L-methionine is bound by residues E56, E81, D108, and D131. D131 is an active-site residue. Substrate contacts are provided by residues K135, D167, and 202–205; that span reads TKFE.

This sequence belongs to the class I-like SAM-binding methyltransferase superfamily. TrmB family.

The enzyme catalyses guanosine(46) in tRNA + S-adenosyl-L-methionine = N(7)-methylguanosine(46) in tRNA + S-adenosyl-L-homocysteine. Its pathway is tRNA modification; N(7)-methylguanine-tRNA biosynthesis. Functionally, catalyzes the formation of N(7)-methylguanine at position 46 (m7G46) in tRNA. The sequence is that of tRNA (guanine-N(7)-)-methyltransferase from Nitrosomonas europaea (strain ATCC 19718 / CIP 103999 / KCTC 2705 / NBRC 14298).